Consider the following 435-residue polypeptide: Putative BTB/POZ domain-containing protein L275 (435 aa).

Residues 80-149 (YDGYVYINVG…IKGKQNDNHN (70 aa)) form the BTB domain.

It belongs to the mimivirus BTB/WD family.

In Acanthamoeba polyphaga mimivirus (APMV), this protein is Putative BTB/POZ domain-containing protein L275.